A 385-amino-acid polypeptide reads, in one-letter code: Acetate kinase (385 aa).

A Mg(2+)-binding site is contributed by Asn-8. Lys-15 serves as a coordination point for ATP. Arg-85 is a binding site for substrate. Asp-142 functions as the Proton donor/acceptor in the catalytic mechanism. Residues 200-204 (HLGNG), 275-277 (DMR), and 323-327 (GIGEN) each bind ATP. Glu-373 serves as a coordination point for Mg(2+).

It belongs to the acetokinase family. Homodimer. The cofactor is Mg(2+). It depends on Mn(2+) as a cofactor.

Its subcellular location is the cytoplasm. The catalysed reaction is acetate + ATP = acetyl phosphate + ADP. The protein operates within metabolic intermediate biosynthesis; acetyl-CoA biosynthesis; acetyl-CoA from acetate: step 1/2. Functionally, catalyzes the formation of acetyl phosphate from acetate and ATP. Can also catalyze the reverse reaction. The protein is Acetate kinase of Francisella tularensis subsp. holarctica (strain OSU18).